We begin with the raw amino-acid sequence, 319 residues long: Annexin A5 (319 aa).

At A2 the chain carries N-acetylalanine. Annexin repeat units lie at residues 13 to 84, 85 to 156, 168 to 240, and 244 to 315; these read FDGR…AMMK, PSRL…VLLQ, AQVE…AVVK, and SIPA…LLCG. Residue K27 forms a Glycyl lysine isopeptide (Lys-Gly) (interchain with G-Cter in SUMO1); alternate linkage. K27 participates in a covalent cross-link: Glycyl lysine isopeptide (Lys-Gly) (interchain with G-Cter in SUMO2); alternate. At S35 the chain carries Phosphoserine. An N6-acetyllysine mark is found at K68, K74, K77, K95, and K99. K288 bears the N6-succinyllysine mark. The [IL]-x-C-x-x-[DE] motif motif lies at 312–318; sequence LLCGGED.

The protein belongs to the annexin family. As to quaternary structure, monomer. Binds ATRX and EIF5B. Post-translationally, S-nitrosylation is induced by interferon-gamma and oxidatively-modified low-densitity lipoprotein (LDL(ox)) possibly implicating the iNOS-S100A8/9 transnitrosylase complex.

Its function is as follows. This protein is an anticoagulant protein that acts as an indirect inhibitor of the thromboplastin-specific complex, which is involved in the blood coagulation cascade. The protein is Annexin A5 (Anxa5) of Mus musculus (Mouse).